The chain runs to 260 residues: Ubiquinone/menaquinone biosynthesis C-methyltransferase UbiE (260 aa).

Residues Thr83, Asp104, and 132–133 (NA) contribute to the S-adenosyl-L-methionine site.

This sequence belongs to the class I-like SAM-binding methyltransferase superfamily. MenG/UbiE family.

The catalysed reaction is a 2-demethylmenaquinol + S-adenosyl-L-methionine = a menaquinol + S-adenosyl-L-homocysteine + H(+). The enzyme catalyses a 2-methoxy-6-(all-trans-polyprenyl)benzene-1,4-diol + S-adenosyl-L-methionine = a 5-methoxy-2-methyl-3-(all-trans-polyprenyl)benzene-1,4-diol + S-adenosyl-L-homocysteine + H(+). It functions in the pathway quinol/quinone metabolism; menaquinone biosynthesis; menaquinol from 1,4-dihydroxy-2-naphthoate: step 2/2. Its pathway is cofactor biosynthesis; ubiquinone biosynthesis. In terms of biological role, methyltransferase required for the conversion of demethylmenaquinol (DMKH2) to menaquinol (MKH2) and the conversion of 2-polyprenyl-6-methoxy-1,4-benzoquinol (DDMQH2) to 2-polyprenyl-3-methyl-6-methoxy-1,4-benzoquinol (DMQH2). The polypeptide is Ubiquinone/menaquinone biosynthesis C-methyltransferase UbiE (Bartonella bacilliformis (strain ATCC 35685 / KC583 / Herrer 020/F12,63)).